The following is a 167-amino-acid chain: Gametocyte-specific factor 1 (167 aa).

At Ser-8 the chain carries Phosphoserine. CHHC U11-48K-type zinc fingers lie at residues 14–41 (LLQC…RKNH) and 48–75 (LATC…DDRS). Zn(2+)-binding residues include Cys-17, His-23, His-33, Cys-37, Cys-51, His-57, His-67, and Cys-71.

This sequence belongs to the UPF0224 (FAM112) family.

The protein resides in the cytoplasm. Required for spermatogenesis and is involved in the suppression of retrotransposon transcription in male germ cells. The polypeptide is Gametocyte-specific factor 1 (GTSF1) (Homo sapiens (Human)).